The chain runs to 110 residues: Chagasin (110 aa).

The BC loop signature appears at Asn29–Phe34. A DE loop motif is present at residues Pro59–Gly68. Positions Arg91–Ser100 match the FG loop motif.

It belongs to the protease inhibitor I42 family. As to quaternary structure, interacts with cruzipain.

It is found in the flagellar pocket. The protein localises to the cytoplasmic vesicle. Its subcellular location is the cell surface. In terms of biological role, cysteine protease inhibitor. Inhibits cysteine protease cruzipain. The polypeptide is Chagasin (cha) (Trypanosoma cruzi).